The chain runs to 77 residues: uncharacterized protein (77 aa).

The protein to E.coli YdfK.

This is an uncharacterized protein from Escherichia coli (strain K12).